The primary structure comprises 516 residues: Protein DML1 (516 aa).

This sequence belongs to the misato family.

Its subcellular location is the mitochondrion. In terms of biological role, involved in the partitioning of the mitochondrial organelle and mitochondrial DNA (mtDNA) inheritance. The polypeptide is Protein DML1 (DML1) (Coccidioides immitis (strain RS) (Valley fever fungus)).